We begin with the raw amino-acid sequence, 287 residues long: Cyclopropane mycolic acid synthase 1 (287 aa).

S-adenosyl-L-methionine is bound by residues 33–34 (YS), 68–76 (LLDVGCGWG), 94–99 (TLSKNQ), and 123–124 (WE). The active site involves Cys-269.

Belongs to the CFA/CMAS family. As to quaternary structure, homodimer.

The protein localises to the cytoplasm. It carries out the reaction a 1-acyl-2-(9Z)-enoyl-sn-glycero-3-phospholipid + S-adenosyl-L-methionine = a 1-acyl-2-(9-cyclopronane)-acyl-sn-glycero-3-phospholipid + S-adenosyl-L-homocysteine + H(+). It functions in the pathway lipid metabolism; mycolic acid biosynthesis. Its function is as follows. Catalyzes the conversion of a double bond to a cyclopropane ring at the distal position of an alpha mycolic acid via the transfer of a methylene group from S-adenosyl-L-methionine. Cyclopropanated mycolic acids are key factors participating in cell envelope permeability, host immunomodulation and persistence. This is Cyclopropane mycolic acid synthase 1 (cmaA1) from Mycobacterium tuberculosis (strain ATCC 25177 / H37Ra).